We begin with the raw amino-acid sequence, 195 residues long: MAATTAAAAVPGVVRAERLLRGGCVVMAATAALLLGFSAETKTVLFVRKTAVAKDVQALWVLTVAAAAAAGYQFAQLVRCMYCSSSGDAGAMAVAWTSFLLDKGCAYVVFASTAAALQACMVGLIGVEALQWSKLCNIYTRFCEQAAAGMLCSFLAAAGMAVLSAFSARRLFRLYSPAGHRRSCPRAAVLATSPH.

Residues 1-18 (MAATTAAAAVPGVVRAER) are Cytoplasmic-facing. A helical membrane pass occupies residues 19-39 (LLRGGCVVMAATAALLLGFSA). Residues 40 to 57 (ETKTVLFVRKTAVAKDVQ) are Extracellular-facing. Residues 58-78 (ALWVLTVAAAAAAGYQFAQLV) traverse the membrane as a helical segment. Over 79-106 (RCMYCSSSGDAGAMAVAWTSFLLDKGCA) the chain is Cytoplasmic. The helical transmembrane segment at 107–127 (YVVFASTAAALQACMVGLIGV) threads the bilayer. Residues 128–145 (EALQWSKLCNIYTRFCEQ) lie on the Extracellular side of the membrane. A helical membrane pass occupies residues 146–166 (AAAGMLCSFLAAAGMAVLSAF). At 167–195 (SARRLFRLYSPAGHRRSCPRAAVLATSPH) the chain is on the cytoplasmic side.

This sequence belongs to the Casparian strip membrane proteins (CASP) family. As to quaternary structure, homodimer and heterodimers.

Its subcellular location is the cell membrane. The polypeptide is CASP-like protein 2C2 (Oryza sativa subsp. japonica (Rice)).